We begin with the raw amino-acid sequence, 471 residues long: Alpha-galactosidase 2 (471 aa).

Residues M1–G18 form the signal peptide. An intrachain disulfide couples C42 to C74. D72 and D73 together coordinate substrate. Residue N105 is glycosylated (N-linked (GlcNAc...) asparagine). An intrachain disulfide couples C121 to C151. K147 lines the substrate pocket. The active-site Nucleophile is the D149. N175 carries N-linked (GlcNAc...) asparagine glycosylation. Substrate is bound at residue R205. The Proton donor role is filled by D209. Disulfide bonds link C221–C237 and C223–C230. Position 251 (Q251) interacts with substrate. N-linked (GlcNAc...) asparagine glycans are attached at residues N270, N370, N403, N413, N422, N435, and N454.

The protein belongs to the glycosyl hydrolase 27 family. As to quaternary structure, homotetramer.

The protein localises to the secreted. The catalysed reaction is Hydrolysis of terminal, non-reducing alpha-D-galactose residues in alpha-D-galactosides, including galactose oligosaccharides, galactomannans and galactolipids.. This chain is Alpha-galactosidase 2 (MEL2), found in Saccharomyces cerevisiae (Baker's yeast).